The primary structure comprises 230 residues: UPF0758 protein plu4865 (230 aa).

Residues 108-230 form the MPN domain; sequence IMSSPSVTQE…CVSFAERGWI (123 aa). Residues H179, H181, and D192 each contribute to the Zn(2+) site. The JAMM motif signature appears at 179–192; it reads HNHPSGHAEPSLAD.

The protein belongs to the UPF0758 family. YicR subfamily.

The protein is UPF0758 protein plu4865 of Photorhabdus laumondii subsp. laumondii (strain DSM 15139 / CIP 105565 / TT01) (Photorhabdus luminescens subsp. laumondii).